We begin with the raw amino-acid sequence, 31 residues long: Cyclotide vibi-H (31 aa).

Positions 1–31 (GLLPCAESCVYIPCLTTVIGCSCKSKVCYKN) form a cross-link, cyclopeptide (Gly-Asn). Intrachain disulfides connect Cys5-Cys21, Cys9-Cys23, and Cys14-Cys28.

In terms of processing, this is a cyclic peptide.

Probably participates in a plant defense mechanism. Has cytotoxic activity, active against a human lymphoma cell line with an IC(50) of 1.6 uM. The chain is Cyclotide vibi-H from Viola biflora (Yellow wood violet).